Here is a 659-residue protein sequence, read N- to C-terminus: Homeobox protein slou (659 aa).

The segment covering 1–21 (MVMLQSPAQKASDSASAQNTA) has biased composition (polar residues). Disordered stretches follow at residues 1–63 (MVML…PAAK), 94–152 (MSSE…SFSS), 198–298 (AQQH…AAPS), 316–349 (TQAS…PSGR), 376–440 (QIAA…DRDA), and 455–548 (PNKF…PRRA). Low complexity-rich tracts occupy residues 27 to 51 (SPNS…SVVS), 95 to 108 (SSES…LSPL), and 120 to 135 (HNNN…NSNT). Polar residues predominate over residues 136 to 152 (RRSQSPPASVGSVSFSS). Residues 201–232 (HMHHHQHQHHQHPAHPHSHQHPHPHPHPHPHP) are compositionally biased toward basic residues. A run of 7 repeats spans residues 221–222 (HP), 223–224 (HP), 225–226 (HP), 227–228 (HP), 229–230 (HP), 231–232 (HP), and 233–234 (HP). Residues 221–234 (HPHPHPHPHPHPHP) form a 7 X 2 AA tandem repeats of H-P region. 2 stretches are compositionally biased toward pro residues: residues 250–263 (PPSP…PPTS) and 275–286 (PIAPPQNPPHSS). Low complexity-rich tracts occupy residues 287 to 298 (QPPQQQQVAAPS) and 316 to 347 (TQAS…GSPS). Positions 388–401 (SEELNVDGNDEDSN) are enriched in acidic residues. A compositionally biased stretch (low complexity) spans 417–435 (RSVNSSAAANPSSASTSAS). 2 stretches are compositionally biased toward acidic residues: residues 478-492 (RDEE…DQSE) and 500-519 (NDMD…DPSS). Residues 528–543 (SRNGDGKSGGGGGGGS) show a composition bias toward gly residues. A DNA-binding region (homeobox) is located at residues 545 to 604 (PRRARTAFTYEQLVSLENKFKTTRYLSVCERLNLALSLSLTETQVKIWFQNRRTKWKKQN).

This sequence belongs to the NK-1 homeobox family. As to expression, mesodermal precursor cells of distinct muscles during embryogenesis, a subset of neuronal cells of the CNS and their precursors and also in cells of a small region of the midgut.

It is found in the nucleus. May play a role in specifying the identity of particular somatic muscles and neurons of the CNS. The sequence is that of Homeobox protein slou (slou) from Drosophila melanogaster (Fruit fly).